The following is a 146-amino-acid chain: uncharacterized protein (146 aa).

A disordered region spans residues 67-93 (DDNGMESGFCSGATSTGQSASTSPAPV). A compositionally biased stretch (low complexity) spans 77-92 (SGATSTGQSASTSPAP).

This is an uncharacterized protein from Caenorhabditis elegans.